A 431-amino-acid chain; its full sequence is Alpha-gurjunene synthase (431 aa).

Residues aspartate 126 and aspartate 130 each coordinate Mg(2+). Arginine 267 contacts (2E,6E)-farnesyl diphosphate. 2 residues coordinate Mg(2+): asparagine 321 and serine 325. Lysine 328 contributes to the (2E,6E)-farnesyl diphosphate binding site. Glutamate 329 lines the Mg(2+) pocket. A (2E,6E)-farnesyl diphosphate-binding site is contributed by arginine 412–tyrosine 413.

Belongs to the terpene synthase family. Mg(2+) serves as cofactor.

The enzyme catalyses (2E,6E)-farnesyl diphosphate = (-)-alpha-gurjunene + diphosphate. It carries out the reaction (2E,6E)-farnesyl diphosphate + H2O = 5-hydroxy-alpha-gurjunene + diphosphate. Its pathway is secondary metabolite biosynthesis; terpenoid biosynthesis. In terms of biological role, catalyzes the conversion of (2E,6E)-farnesyl diphosphate (FPP) into the sesquiterpene alcohols (-)-alpha-gurjunene and 5-hydroxy-alpha-gurjunene. Other unidentified sesquiterpene alcohols found to be catalyzed by MTPSL4 may arise from carbocation reaction intermediates along the catalytic cascade to gurjunene being quenched by a water molecule, yielding formation of the alcohols. This is Alpha-gurjunene synthase from Marchantia polymorpha (Common liverwort).